Reading from the N-terminus, the 130-residue chain is Small ribosomal subunit protein uS9 (130 aa).

This sequence belongs to the universal ribosomal protein uS9 family.

The sequence is that of Small ribosomal subunit protein uS9 from Pectobacterium carotovorum subsp. carotovorum (strain PC1).